Here is a 202-residue protein sequence, read N- to C-terminus: Dephospho-CoA kinase (202 aa).

The DPCK domain maps to 3-202 (TIGITGGIGS…TKRPNPPDRL (200 aa)). An ATP-binding site is contributed by 11-16 (GSGKSV). Positions 138–161 (RAMARDGSSAETMRQRMLSQEREQ) are disordered.

The protein belongs to the CoaE family.

It localises to the cytoplasm. It carries out the reaction 3'-dephospho-CoA + ATP = ADP + CoA + H(+). Its pathway is cofactor biosynthesis; coenzyme A biosynthesis; CoA from (R)-pantothenate: step 5/5. Catalyzes the phosphorylation of the 3'-hydroxyl group of dephosphocoenzyme A to form coenzyme A. In Porphyromonas gingivalis (strain ATCC BAA-308 / W83), this protein is Dephospho-CoA kinase.